The chain runs to 243 residues: Ribosomal RNA small subunit methyltransferase J (243 aa).

Residues 112–113 (ER) and Asp164 each bind S-adenosyl-L-methionine.

This sequence belongs to the methyltransferase superfamily. RsmJ family.

The protein localises to the cytoplasm. It carries out the reaction guanosine(1516) in 16S rRNA + S-adenosyl-L-methionine = N(2)-methylguanosine(1516) in 16S rRNA + S-adenosyl-L-homocysteine + H(+). Specifically methylates the guanosine in position 1516 of 16S rRNA. This Legionella pneumophila (strain Paris) protein is Ribosomal RNA small subunit methyltransferase J.